The primary structure comprises 445 residues: MVRMEDIISLAKRKGFVFQSSEVYGGLSGAWDYGPLGVELKKNIKSEWWKSMVYLHENIVGLDSAIFMRPEIWRASGHIDGFSDSMVDCKDCKSRFRADFIDLSKNCPNCKVGNNFTSPRSFNLMFKTHIGVVEDSSSEIYLRPETAQGIFVNFRNVLDSSRLKIPFGIAQVGKAFRNEIVTKNFIFRTCEFEQMEMQFFVHPKQIDEWFCYWQQNRMNFFIETLKIRPDKLRFKAHDSTQLAHYAKSAFDIEYEFPFGFQEVEGIHNRGNYDLTQHSKFSNNPKIFEYHDLLTKERYVPHVIETSAGLTRSVLMTLCNAYSEEELSDGDKRIVLRLHPKLAPYKIAIFPLVKKVELVEIARRIYIELCDDFHIFYDDSGTIGKRYRRQDEIGTPYCVTVDYSTIEDETVTVRERNNMTQKRIFINDLYSYIKTEILNYKEDFNK.

Substrate is bound by residues Arg-97 and Glu-145. ATP contacts are provided by residues 177–179 (RNE), 187–192 (FRTCEF), 262–263 (EV), and 308–311 (GLTR). A substrate-binding site is contributed by 192 to 196 (FEQME). Residue 304–308 (ETSAG) coordinates substrate.

It belongs to the class-II aminoacyl-tRNA synthetase family. As to quaternary structure, homodimer.

It localises to the cytoplasm. The enzyme catalyses tRNA(Gly) + glycine + ATP = glycyl-tRNA(Gly) + AMP + diphosphate. Catalyzes the attachment of glycine to tRNA(Gly). This chain is Glycine--tRNA ligase, found in Borrelia garinii subsp. bavariensis (strain ATCC BAA-2496 / DSM 23469 / PBi) (Borreliella bavariensis).